Consider the following 449-residue polypeptide: Probable cysteine proteinase 224L (449 aa).

Residues C99, H292, and N322 contribute to the active site. A helical transmembrane segment spans residues 429–449 (DTQIVFIFFLSVVILFIFIIL).

This sequence belongs to the peptidase C1 family.

It localises to the membrane. Probable cysteine protease. The chain is Probable cysteine proteinase 224L from Acheta domesticus (House cricket).